The following is a 78-amino-acid chain: UPF0291 protein ABC2165 (78 aa).

Residues 56-78 (AKGNDVTPQKLKDSKAQKHKRLH) form a disordered region.

It belongs to the UPF0291 family.

The protein localises to the cytoplasm. The protein is UPF0291 protein ABC2165 of Shouchella clausii (strain KSM-K16) (Alkalihalobacillus clausii).